A 178-amino-acid chain; its full sequence is Interleukin-10 (178 aa).

The first 18 residues, 1–18, serve as a signal peptide directing secretion; sequence MHSSALLCCLVLLTGVRA. Cystine bridges form between C30–C126 and C80–C132. An N-linked (GlcNAc...) asparagine glycan is attached at N134.

This sequence belongs to the IL-10 family. As to quaternary structure, homodimer. Interacts with IL10RA and IL10RB.

The protein resides in the secreted. In terms of biological role, major immune regulatory cytokine that acts on many cells of the immune system where it has profound anti-inflammatory functions, limiting excessive tissue disruption caused by inflammation. Mechanistically, IL10 binds to its heterotetrameric receptor comprising IL10RA and IL10RB leading to JAK1 and STAT2-mediated phosphorylation of STAT3. In turn, STAT3 translocates to the nucleus where it drives expression of anti-inflammatory mediators. Targets antigen-presenting cells (APCs) such as macrophages and monocytes and inhibits their release of pro-inflammatory cytokines including granulocyte-macrophage colony-stimulating factor /GM-CSF, granulocyte colony-stimulating factor/G-CSF, IL-1 alpha, IL-1 beta, IL-6, IL-8 and TNF-alpha. Also interferes with antigen presentation by reducing the expression of MHC-class II and co-stimulatory molecules, thereby inhibiting their ability to induce T cell activation. In addition, controls the inflammatory response of macrophages by reprogramming essential metabolic pathways including mTOR signaling. This is Interleukin-10 (IL10) from Pan troglodytes (Chimpanzee).